The following is a 1247-amino-acid chain: MSKFLDRFRYFKQKGETFADGHGQLLNTNRDWEDGYRQRWQHDKIVRSTHGVNCTGSCSWKIYVKNGLVTWETQQTDYPRTRPDLPNHEPRGCPRGASYSWYLYSANRLKYPMMRKRLMKMWREAKALHSDPVEAWASIIEDADKAKSFKQARGRGGFVRSSWQEVNELIAASNVYTIKNYGPDRVAGFSPIPAMSMVSYASGARYLSLIGGTCLSFYDWYCDLPPASPQTWGEQTDVPESADWYNSSYIIAWGSNVPQTRTPDAHFFTEVRYKGTKTVAVTPDYAEIAKLCDLWLAPKQGTDAAMALAMGHVMLREFHLDNPSQYFTDYVRRYTDMPMLVMLEERDGYYAAGRMLRAADLVDALGQENNPEWKTVAFNTNGEMVAPNGSIGFRWGEKGKWNLEQRDGKTGEETELQLSLLGSQDEIAEVGFPYFGGDGTEHFNKVELENVLLHKLPVKRLQLADGSTALVTTVYDLTLANYGLERGLNDVNCATSYDDVKAYTPAWAEQITGVSRSQIIRIAREFADNADKTHGRSMIIVGAGLNHWYHLDMNYRGLINMLIFCGCVGQSGGGWAHYVGQEKLRPQTGWQPLAFALDWQRPARHMNSTSYFYNHSSQWRYETVTAEELLSPMADKSRYTGHLIDFNVRAERMGWLPSAPQLGTNPLTIAGEAEKAGMNPVDYTVKSLKEGSIRFAAEQPENGKNHPRNLFIWRSNLLGSSGKGHEFMLKYLLGTEHGIQGKDLGQQGGVKPEEVDWQDNGLEGKLDLVVTLDFRLSSTCLYSDIILPTATWYEKDDMNTSDMHPFIHPLSAAVDPAWEAKSDWEIYKAIAKKFSEVCVGHLGKETDIVTLPIQHDSAAELAQPLDVKDWKKGECDLIPGKTAPHIMVVERDYPATYERFTSIGPLMEKIGNGGKGIAWNTQSEMDLLRKLNYTKAEGPAKGQPMLNTAIDAAEMILTLAPETNGQVAVKAWAALSEFTGRDHTHLALNKEDEKIRFRDIQAQPRKIISSPTWSGLEDEHVSYNAGYTNVHELIPWRTLSGRQQLYQDHQWMRDFGESLLVYRPPIDTRSVKEVIGQKSNGNQEKALNFLTPHQKWGIHSTYSDNLLMLTLGRGGPVVWLSEADAKDLGIADNDWIEVFNSNGALTARAVVSQRVPAGMTMMYHAQERIVNLPGSEITQQRGGIHNSVTRITPKPTHMIGGYAHLAYGFNYYGTVGSNRDEFVVVRKMKNIDWLDGEGNDQVQESVK.

The 4Fe-4S Mo/W bis-MGD-type domain occupies 43-107 (DKIVRSTHGV…SYSWYLYSAN (65 aa)). [4Fe-4S] cluster contacts are provided by His-50, Cys-54, Cys-58, and Cys-93. Residue Asp-223 coordinates Mo-bis(molybdopterin guanine dinucleotide).

This sequence belongs to the prokaryotic molybdopterin-containing oxidoreductase family. Dimer of heterotrimers each composed of an alpha, a beta and a gamma chain. Alpha and beta are catalytic chains; gamma chains are involved in binding the enzyme complex to the cytoplasmic membrane. Interacts with the NarJ chaperone. It depends on [4Fe-4S] cluster as a cofactor. Mo-bis(molybdopterin guanine dinucleotide) serves as cofactor.

It localises to the cell membrane. It catalyses the reaction nitrate + a quinol = a quinone + nitrite + H2O. The nitrate reductase enzyme complex allows E.coli to use nitrate as an electron acceptor during anaerobic growth. The alpha chain is the actual site of nitrate reduction. In Escherichia coli (strain K12), this protein is Respiratory nitrate reductase 1 alpha chain (narG).